An 88-amino-acid polypeptide reads, in one-letter code: ATP synthase subunit 9, mitochondrial (88 aa).

2 helical membrane-spanning segments follow: residues 8–28 (IGAGAATIASAGAAIGIGNVF) and 45–72 (LFGYAILGFALSELIALFALMMAFLILF).

It belongs to the ATPase C chain family. In terms of assembly, F-type ATPases have 2 components, CF(1) - the catalytic core - and CF(0) - the membrane proton channel. CF(1) has five subunits: alpha(3), beta(3), gamma(1), delta(1), epsilon(1). CF(0) has three main subunits: a, b and c.

It is found in the mitochondrion membrane. It catalyses the reaction ATP + H2O + 4 H(+)(in) = ADP + phosphate + 5 H(+)(out). In terms of biological role, this protein is one of the chains of the nonenzymatic membrane component (F0) of mitochondrial ATPase. The sequence is that of ATP synthase subunit 9, mitochondrial (ATP9) from Beta vulgaris (Sugar beet).